The following is a 605-amino-acid chain: Elongation factor 4 (605 aa).

Residues 9-192 (SRIRNFCIIA…AIIARVPAPA (184 aa)) form the tr-type G domain. Residues 21–26 (DHGKST) and 139–142 (NKID) contribute to the GTP site.

This sequence belongs to the TRAFAC class translation factor GTPase superfamily. Classic translation factor GTPase family. LepA subfamily.

It is found in the cell inner membrane. The enzyme catalyses GTP + H2O = GDP + phosphate + H(+). Functionally, required for accurate and efficient protein synthesis under certain stress conditions. May act as a fidelity factor of the translation reaction, by catalyzing a one-codon backward translocation of tRNAs on improperly translocated ribosomes. Back-translocation proceeds from a post-translocation (POST) complex to a pre-translocation (PRE) complex, thus giving elongation factor G a second chance to translocate the tRNAs correctly. Binds to ribosomes in a GTP-dependent manner. The chain is Elongation factor 4 from Chlorobium luteolum (strain DSM 273 / BCRC 81028 / 2530) (Pelodictyon luteolum).